Reading from the N-terminus, the 589-residue chain is Leucine-rich repeat and immunoglobulin-like domain-containing nogo receptor-interacting protein 3 (589 aa).

Positions 1–23 are cleaved as a signal peptide; that stretch reads MTCWLHMLGLHLLLLPTAPLAAG. The 30-residue stretch at 24–53 folds into the LRRNT domain; that stretch reads CPARCECSASTRTVACGRRRLTAIPEGIPA. Residues 24-528 are Extracellular-facing; that stretch reads CPARCECSAS…LDLTTILVST (505 aa). 11 LRR repeats span residues 54 to 75, 78 to 99, 102 to 123, 126 to 147, 150 to 171, 174 to 195, 206 to 227, 246 to 267, 270 to 291, 294 to 315, and 318 to 339; these read ETRM…DLAS, TLEE…AFAN, RLRV…VFTH, SLTL…SFQD, SLQR…AFAG, GLAE…SLGH, HLAI…SHLE, NLTS…ALRQ, HLTC…SFRD, RLRE…AFVG, and QIRL…TFHS. Asn-184 carries an N-linked (GlcNAc...) asparagine glycan. N-linked (GlcNAc...) asparagine glycans are attached at residues Asn-246, Asn-256, and Asn-275. N-linked (GlcNAc...) asparagine glycosylation occurs at Asn-323. The region spanning 351-405 is the LRRCT domain; sequence NPLACDCRLLWIVQRRKTLNFDGRLPACATPAEVRGDALHNLPDSVLFEYFVCRK. Residues 406 to 495 form the Ig-like C2-type domain; sequence PKIRERRLQH…GNDTYFATLT (90 aa). A disulfide bridge connects residues Cys-428 and Cys-479. Residues Asn-487, Asn-501, and Asn-509 are each glycosylated (N-linked (GlcNAc...) asparagine). The chain crosses the membrane as a helical span at residues 529–549; it reads AMGCITFLGVVLFCFLLLFVW. At 550–589 the chain is on the cytoplasmic side; that stretch reads SRGRGQHKNNFSVEYSFRKVDGPAAAAGQGGARKFNMKMI.

The protein localises to the membrane. The polypeptide is Leucine-rich repeat and immunoglobulin-like domain-containing nogo receptor-interacting protein 3 (Lingo3) (Mus musculus (Mouse)).